The following is a 198-amino-acid chain: MSSPEIETLTQALAKLPGLGPRSARRAVLHLLKKREAALGPLLRALEAVNDKLTSCHVCGNVDTGDPCGICADPRRDARMLCVVEEVADLWALDRSRLFPGRFHVLGGRLSALEGIRPEDLSIDLLIGRIAAGGIDEVVLAMNATLEGQTTAHYIADRLESFPVRLTQLAHGLPVGGELDYLDEGTLAQALRARRPVS.

A C4-type zinc finger spans residues 56–71 (CHVCGNVDTGDPCGIC). The 96-residue stretch at 79–174 (RMLCVVEEVA…RLTQLAHGLP (96 aa)) folds into the Toprim domain.

It belongs to the RecR family.

Functionally, may play a role in DNA repair. It seems to be involved in an RecBC-independent recombinational process of DNA repair. It may act with RecF and RecO. The protein is Recombination protein RecR of Rhizorhabdus wittichii (strain DSM 6014 / CCUG 31198 / JCM 15750 / NBRC 105917 / EY 4224 / RW1) (Sphingomonas wittichii).